Here is a 398-residue protein sequence, read N- to C-terminus: S-adenosylmethionine synthase (398 aa).

His17 contacts ATP. Asp19 is a Mg(2+) binding site. A K(+)-binding site is contributed by Glu45. Glu58 and Gln101 together coordinate L-methionine. Positions 101 to 111 are flexible loop; the sequence is QSPDIAQGVDK. ATP-binding positions include 176-178, 243-244, Asp252, 258-259, and Lys279; these read DGK, RF, and RK. Asp252 lines the L-methionine pocket. Lys283 is a binding site for L-methionine.

This sequence belongs to the AdoMet synthase family. Homotetramer; dimer of dimers. Requires Mg(2+) as cofactor. K(+) serves as cofactor.

It is found in the cytoplasm. The enzyme catalyses L-methionine + ATP + H2O = S-adenosyl-L-methionine + phosphate + diphosphate. It participates in amino-acid biosynthesis; S-adenosyl-L-methionine biosynthesis; S-adenosyl-L-methionine from L-methionine: step 1/1. Catalyzes the formation of S-adenosylmethionine (AdoMet) from methionine and ATP. The overall synthetic reaction is composed of two sequential steps, AdoMet formation and the subsequent tripolyphosphate hydrolysis which occurs prior to release of AdoMet from the enzyme. This is S-adenosylmethionine synthase from Staphylococcus haemolyticus (strain JCSC1435).